The following is a 377-amino-acid chain: Homoserine O-acetyltransferase (377 aa).

The AB hydrolase-1 domain occupies 48–347 (NVVLIEHALT…PVGHDAFLTE (300 aa)). The Nucleophile role is filled by serine 143. Arginine 213 serves as a coordination point for substrate. Residues aspartate 311 and histidine 341 contribute to the active site. Aspartate 342 is a substrate binding site.

This sequence belongs to the AB hydrolase superfamily. MetX family. Homodimer.

It localises to the cytoplasm. It carries out the reaction L-homoserine + acetyl-CoA = O-acetyl-L-homoserine + CoA. It functions in the pathway amino-acid biosynthesis; L-methionine biosynthesis via de novo pathway; O-acetyl-L-homoserine from L-homoserine: step 1/1. Functionally, transfers an acetyl group from acetyl-CoA to L-homoserine, forming acetyl-L-homoserine. The sequence is that of Homoserine O-acetyltransferase from Corynebacterium glutamicum (strain ATCC 13032 / DSM 20300 / JCM 1318 / BCRC 11384 / CCUG 27702 / LMG 3730 / NBRC 12168 / NCIMB 10025 / NRRL B-2784 / 534).